The chain runs to 372 residues: MGTTEATLRMENVDVRDEWQDEDLPRPLPEDTGVERLGGAVEDSSSPPSTLNLSGAHRKRKTLVAPEINISLDQSEGSLLSDDFLDTPDDLDINVDDIETPDETDSLEFLGNGNELEWEDDTPVATAKNMPGDSADLFGDGSAEDGSAANGRLWRTVIIGEQEHRIDLHMIRPYMKVVTHGGYYGEGLNAIIVFAACFLPDSSSPDYHYIMENLFLYVISSLELLVAEDYMIVYLNGATPRRRMPGIGWLKKCYHMIDRRLRKNLKSLIIVHPSWFIRTVLAISRPFISVKFISKIQYVHSLEELERLIPMEHVQLPDCVLQYEEQRLRAKRESTRPPQPEFLLPRSEEKPETVEEEDRAAEATEDQETSMS.

A disordered region spans residues 1 to 58; sequence MGTTEATLRMENVDVRDEWQDEDLPRPLPEDTGVERLGGAVEDSSSPPSTLNLSGAHR. Basic and acidic residues predominate over residues 11 to 29; it reads ENVDVRDEWQDEDLPRPLP. Residues 43 to 53 are compositionally biased toward polar residues; the sequence is DSSSPPSTLNL. Residue serine 54 is modified to Phosphoserine. The interval 115–120 is required for interaction with KLC1; it reads ELEWED. Positions 171–328 constitute a CRAL-TRIO domain; that stretch reads IRPYMKVVTH…CVLQYEEQRL (158 aa). The segment at 190–372 is mediates interaction with GLS; the sequence is AIIVFAACFL…ATEDQETSMS (183 aa). Residues 329 to 372 are disordered; that stretch reads RAKRESTRPPQPEFLLPRSEEKPETVEEEDRAAEATEDQETSMS. The span at 354–372 shows a compositional bias: acidic residues; the sequence is VEEEDRAAEATEDQETSMS.

In terms of assembly, interacts with KLC1; may link mitochondria to KLC1 and regulate mitochondria localization into neuron projections. Interacts with GLS; the interaction is direct and may control GLS localization, negatively regulating its activity. Interacts with PIN1 (via WW domain); upon NGF stimulation. The interaction with PIN1 and GLS is competitive. Cleaved by CASP3 and CASP7. The potential C-terminal product released by CASP3 cleavage may inhibit the ERK signaling pathway through MAP2K2. Post-translationally, may be ubiquitinated by STUB1. As to expression, neuronal tissues specific. Strongly expressed in brain. Expressed in virtually all parts of the adult brain, including cortex, cerebellum and olfactory bulbs. Enriched in hippocampus, cerebellar cortex, deep cerebellar nuclei, and pontine nuclei (at protein level).

It is found in the cell projection. The protein resides in the axon. It localises to the dendrite. The protein localises to the presynapse. Its subcellular location is the mitochondrion. It is found in the growth cone. The protein resides in the cytoplasm. Its function is as follows. Functions in the development of neural tissues, particularly the postnatal maturation of the cerebellar cortex. May play a role in neurotransmission through regulation of glutaminase/GLS, an enzyme responsible for the production in neurons of the glutamate neurotransmitter. Alternatively, may regulate the localization of mitochondria within axons and dendrites. The protein is Caytaxin (Atcay) of Mus musculus (Mouse).